Here is a 570-residue protein sequence, read N- to C-terminus: MDFLRTSLIVGLLVVSYLLVLEWNEDMSPQQQPVAQTPSVTIDSNGADSSALLNSPNTGELDTPETASKPATAEDSNISSTASSGKIITVITDVLRVEIDLNGGNVVEASLLQYPISLKNPTPLDLMQKNNGVYYVAASSLIGANGFDDSKNGGNPIYIAEKNSYSLQEGQDKLSVDLRTERDGVTIVKRYEFEKSSYSINVNFQINNQSDAPWKANFSAKLVRDKSPDPTFSGGFGAASFLGAVVSTPEKPYEKIDFSDMEESGPSGVKVNSSNGWIAFIQHYFVSAWIPLSNDTHTYQTRLRNGLYLMGFVDPEFTVEPGQTHNVGAKLYAGPKIMETLKEVAPNLDLTVDFGWLWLIAKPLYLVLEFIHDYVGNWGIAIILLTVLIKALFFHLSATSYRSMANMRRVTPEMQRIREQYGDDRQRMSQAMMELYKKEKINPLGGCLPMLVQMPVFISLYWVLLESVQLRQAPFFFWIQDLSIKDPYFVLPLLMGAAMFLQTSLNPTPPDPIQARVMKMMPIIFTVFFLWFPAGLVLYWLVNNILSIAQQWYITKKIENGGLAAKKIAS.

The span at 31-60 shows a compositional bias: polar residues; the sequence is QQPVAQTPSVTIDSNGADSSALLNSPNTGE. The disordered stretch occupies residues 31–79; that stretch reads QQPVAQTPSVTIDSNGADSSALLNSPNTGELDTPETASKPATAEDSNIS. 5 helical membrane passes run 230 to 250, 378 to 398, 444 to 464, 487 to 507, and 522 to 542; these read PTFS…STPE, WGIA…HLSA, LGGC…YWVL, PYFV…SLNP, and PIIF…YWLV.

The protein belongs to the OXA1/ALB3/YidC family. Type 1 subfamily. In terms of assembly, interacts with the Sec translocase complex via SecD. Specifically interacts with transmembrane segments of nascent integral membrane proteins during membrane integration.

Its subcellular location is the cell inner membrane. In terms of biological role, required for the insertion and/or proper folding and/or complex formation of integral membrane proteins into the membrane. Involved in integration of membrane proteins that insert both dependently and independently of the Sec translocase complex, as well as at least some lipoproteins. Aids folding of multispanning membrane proteins. The sequence is that of Membrane protein insertase YidC from Hahella chejuensis (strain KCTC 2396).